A 255-amino-acid chain; its full sequence is High-affinity branched-chain amino acid transport ATP-binding protein LivG (255 aa).

Positions 6 to 254 constitute an ABC transporter domain; the sequence is LSVNGLMMRF…PDVIRAYLGE (249 aa). Residue 38 to 45 participates in ATP binding; sequence GPNGAGKT.

Belongs to the ABC transporter superfamily.

Functionally, component of the leucine-specific transport system. This is High-affinity branched-chain amino acid transport ATP-binding protein LivG (livG) from Escherichia coli O157:H7.